Reading from the N-terminus, the 206-residue chain is 2-phospho-L-lactate guanylyltransferase (206 aa).

It belongs to the CofC family. In terms of assembly, homodimer.

It carries out the reaction (2S)-2-phospholactate + GTP + H(+) = (2S)-lactyl-2-diphospho-5'-guanosine + diphosphate. Its pathway is cofactor biosynthesis; coenzyme F420 biosynthesis. Guanylyltransferase that catalyzes the activation of (2S)-2-phospholactate (2-PL) as (2S)-lactyl-2-diphospho-5'-guanosine, via the condensation of 2-PL with GTP. It is involved in the biosynthesis of coenzyme F420, a hydride carrier cofactor. In Archaeoglobus fulgidus (strain ATCC 49558 / DSM 4304 / JCM 9628 / NBRC 100126 / VC-16), this protein is 2-phospho-L-lactate guanylyltransferase.